The chain runs to 369 residues: Serpentine receptor class epsilon-45 (369 aa).

Transmembrane regions (helical) follow at residues 1–21 (MIFL…IFIL), 39–59 (FVLT…AIHI), 67–87 (TVLL…NILI), 127–147 (FFLG…TLLV), 169–191 (GLFF…LFFF), 195–217 (HFAV…FTYV), 258–278 (VIHA…FMYL), and 291–311 (IFES…LGSV).

It belongs to the nematode receptor-like protein sre family.

Its subcellular location is the membrane. The protein is Serpentine receptor class epsilon-45 (sre-45) of Caenorhabditis elegans.